Here is a 463-residue protein sequence, read N- to C-terminus: Probable transport protein HsrA (463 aa).

Helical transmembrane passes span 10–30 (GLAWVAAMALFMQSLDATILN), 49–69 (MAIIAYSLAVALFIPLTAWAA), 82–102 (VFTFILGSVACAAASNLESLI), 107–127 (IQGIGGAFMMPVARLAIIQAV), 139–159 (MATAGLIGPILGPILGGWLVI), 165–185 (WIFLINIPIGALGILASGSVM), 197–217 (WTGFLLFALGLVGITLGLDLL), 225–245 (SVTYSILVVGILLLVTYCGYA), 267–287 (IIANIFIRLSASGVPFLLPLM), 298–318 (MSGWLLAPIALISVMLKILIG), 328–348 (TTLISSALLMAGSVISMAWLD), 354–374 (TWIICNLMWYGACMSIIFTSI), 393–413 (VLSIVQQVGIGFGIAVSSIIL), and 429–449 (AFSYTFLTSSLFVIALVWSLM).

It belongs to the major facilitator superfamily. EmrB family.

The protein resides in the cell inner membrane. The chain is Probable transport protein HsrA (hsrA) from Haemophilus influenzae (strain ATCC 51907 / DSM 11121 / KW20 / Rd).